A 123-amino-acid polypeptide reads, in one-letter code: Large ribosomal subunit protein eL8 (123 aa).

It belongs to the eukaryotic ribosomal protein eL8 family. In terms of assembly, part of the 50S ribosomal subunit. Probably part of the RNase P complex.

The protein localises to the cytoplasm. Its function is as follows. Multifunctional RNA-binding protein that recognizes the K-turn motif in ribosomal RNA, the RNA component of RNase P, box H/ACA, box C/D and box C'/D' sRNAs. The protein is Large ribosomal subunit protein eL8 of Methanobrevibacter smithii (strain ATCC 35061 / DSM 861 / OCM 144 / PS).